We begin with the raw amino-acid sequence, 120 residues long: Large ribosomal subunit protein uL18 (120 aa).

It belongs to the universal ribosomal protein uL18 family. Part of the 50S ribosomal subunit; part of the 5S rRNA/L5/L18/L25 subcomplex. Contacts the 5S and 23S rRNAs.

Functionally, this is one of the proteins that bind and probably mediate the attachment of the 5S RNA into the large ribosomal subunit, where it forms part of the central protuberance. The protein is Large ribosomal subunit protein uL18 of Rhodopseudomonas palustris (strain BisB5).